The sequence spans 190 residues: Protein soem-1 (190 aa).

One can recognise an SH2 domain in the interval Y96–V190.

In terms of assembly, interacts with abl-1. In terms of tissue distribution, expressed in PQR, but not AQR, Q neuroblast descendents.

Functions downstream of migratory protein mig-13 and may play a role in the control of Q neuroblast migration during larval development. The protein is Protein soem-1 of Caenorhabditis elegans.